A 201-amino-acid chain; its full sequence is ATP-dependent Clp protease proteolytic subunit (201 aa).

Serine 97 functions as the Nucleophile in the catalytic mechanism. Histidine 122 is a catalytic residue.

It belongs to the peptidase S14 family. Fourteen ClpP subunits assemble into 2 heptameric rings which stack back to back to give a disk-like structure with a central cavity, resembling the structure of eukaryotic proteasomes.

It is found in the cytoplasm. It catalyses the reaction Hydrolysis of proteins to small peptides in the presence of ATP and magnesium. alpha-casein is the usual test substrate. In the absence of ATP, only oligopeptides shorter than five residues are hydrolyzed (such as succinyl-Leu-Tyr-|-NHMec, and Leu-Tyr-Leu-|-Tyr-Trp, in which cleavage of the -Tyr-|-Leu- and -Tyr-|-Trp bonds also occurs).. Cleaves peptides in various proteins in a process that requires ATP hydrolysis. Has a chymotrypsin-like activity. Plays a major role in the degradation of misfolded proteins. This chain is ATP-dependent Clp protease proteolytic subunit, found in Nitratidesulfovibrio vulgaris (strain DSM 19637 / Miyazaki F) (Desulfovibrio vulgaris).